Reading from the N-terminus, the 1207-residue chain is Systemin receptor SR160 (1207 aa).

The first 34 residues, 1–34 (MKAHKTVFNQHPLSLNKLFFVLLLIFFLPPASPA), serve as a signal peptide directing secretion. The Cys pair 1 motif lies at 71–78 (CSFTGVSC). LRR repeat units follow at residues 109 to 131 (NLESLVLKNANLSGSLTSAAKSQ), 135 to 157 (TLDSIDLAENTISGPISDISSFG), 161 to 181 (NLKSLNLSKNFLDPPGKEMLK), 186 to 207 (SLQVLDLSYNNISGFNLFPWVS), 213 to 234 (ELEFFSIKGNKLAGSIPELDFK), 235 to 257 (NLSYLDLSANNFSTVFPSFKDCS), 258 to 280 (NLQHLDLSSNKFYGDIGSSLSSC), 282 to 304 (KLSFLNLTNNQFVGLVPKLPSES), 305 to 325 (LQYLYLRGNDFQGVYPNQLAD), 329 to 350 (TVVELDLSYNNFSGMVPESLGE), 353 to 375 (SLELVDISNNNFSGKLPVDTLLK), 378 to 401 (NIKTMVLSFNKFVGGLPDSFSNLP), 402 to 423 (KLETLDMSSNNLTGIIPSGICK), 428 to 450 (NLKVLYLQNNLFKGPIPDSLSNC), 452 to 474 (QLVSLDLSFNYLTGSIPSSLGSL), 476 to 499 (KLKDLILWLNQLSGEIPQELMYLQ), 500 to 523 (ALENLILDFNDLTGPIPASLSNCT), 524 to 547 (KLNWISLSNNQLSGEIPASLGRLS), 548 to 570 (NLAILKLGNNSISGNIPAELGNC), and 572 to 594 (SLIWLDLNTNFLNGSIPPPLFKQ). N119 carries N-linked (GlcNAc...) asparagine glycosylation. Residues N166 and N196 are each glycosylated (N-linked (GlcNAc...) asparagine). Residues N235 and N245 are each glycosylated (N-linked (GlcNAc...) asparagine). A glycan (N-linked (GlcNAc...) asparagine) is linked at N287. N-linked (GlcNAc...) asparagine glycosylation is found at N339 and N363. Residues N412 and N449 are each glycosylated (N-linked (GlcNAc...) asparagine). N521 carries N-linked (GlcNAc...) asparagine glycosylation. N-linked (GlcNAc...) asparagine glycosylation is found at N556, N584, N646, and N662. LRR repeat units lie at residues 664 to 686 (SMIFLDLSYNKLEGSIPKELGAM), 688 to 711 (YLSILNLGHNDLSGMIPQQLGGLK), 712 to 735 (NVAILDLSYNRFNGTIPNSLTSLT), and 736 to 758 (LLGEIDLSNNNLSGMIPESAPFD). N724, N746, and N767 each carry an N-linked (GlcNAc...) asparagine glycan. A Cys pair 2 motif is present at residues 771-779 (CGYPLPLPC). Residues 803 to 823 (SVAMGLLFSLFCIFGLIIVAI) traverse the membrane as a helical segment. The 276-residue stretch at 888-1163 (FHNDSLVGSG…IQVMAMFKEI (276 aa)) folds into the Protein kinase domain. ATP contacts are provided by residues 894–902 (VGSGGFGDV) and K916. Catalysis depends on D1014, which acts as the Proton acceptor.

The protein belongs to the protein kinase superfamily. Ser/Thr protein kinase family. In terms of processing, glycosylated.

It is found in the cell membrane. It carries out the reaction L-seryl-[protein] + ATP = O-phospho-L-seryl-[protein] + ADP + H(+). It catalyses the reaction L-threonyl-[protein] + ATP = O-phospho-L-threonyl-[protein] + ADP + H(+). Functionally, receptor with a serine/threonine-protein kinase activity. Involved in the perception of systemin, a peptide hormone responsible for the systemic activation of defense genes in leaves of wounded plants. May also regulate, in response to brassinosteroid binding, a signaling cascade involved in plant development. The protein is Systemin receptor SR160 of Solanum peruvianum (Peruvian tomato).